We begin with the raw amino-acid sequence, 101 residues long: Small ribosomal subunit protein uS14 (101 aa).

The protein belongs to the universal ribosomal protein uS14 family. In terms of assembly, part of the 30S ribosomal subunit. Contacts proteins S3 and S10.

In terms of biological role, binds 16S rRNA, required for the assembly of 30S particles and may also be responsible for determining the conformation of the 16S rRNA at the A site. This chain is Small ribosomal subunit protein uS14, found in Zymomonas mobilis subsp. mobilis (strain ATCC 31821 / ZM4 / CP4).